We begin with the raw amino-acid sequence, 234 residues long: Gene 53 protein (234 aa).

The protein is Gene 53 protein (53) of Mycobacterium phage L5 (Mycobacteriophage L5).